We begin with the raw amino-acid sequence, 154 residues long: Myoglobin (154 aa).

Residues 2–148 (GLSDGEWQLV…FRKDIAAKYK (147 aa)) form the Globin domain. The residue at position 4 (serine 4) is a Phosphoserine. Histidine 65 serves as a coordination point for nitrite. Histidine 65 lines the O2 pocket. Phosphothreonine is present on threonine 68. Histidine 94 provides a ligand contact to heme b.

This sequence belongs to the globin family. Monomeric.

It is found in the cytoplasm. The protein resides in the sarcoplasm. The catalysed reaction is Fe(III)-heme b-[protein] + nitric oxide + H2O = Fe(II)-heme b-[protein] + nitrite + 2 H(+). The enzyme catalyses H2O2 + AH2 = A + 2 H2O. Functionally, monomeric heme protein which primary function is to store oxygen and facilitate its diffusion within muscle tissues. Reversibly binds oxygen through a pentacoordinated heme iron and enables its timely and efficient release as needed during periods of heightened demand. Depending on the oxidative conditions of tissues and cells, and in addition to its ability to bind oxygen, it also has a nitrite reductase activity whereby it regulates the production of bioactive nitric oxide. Under stress conditions, like hypoxia and anoxia, it also protects cells against reactive oxygen species thanks to its pseudoperoxidase activity. The protein is Myoglobin (MB) of Castor fiber (Eurasian beaver).